A 304-amino-acid chain; its full sequence is HTH-type transcriptional regulator TtuA (304 aa).

One can recognise an HTH lysR-type domain in the interval 1-58 (MELEQLKCFVAAAEELHFGRAAQKMGILPASLGRHLRLLEESLGTRLMSRTTRSVALT). The segment at residues 18–37 (FGRAAQKMGILPASLGRHLR) is a DNA-binding region (H-T-H motif).

This sequence belongs to the LysR transcriptional regulatory family.

In terms of biological role, transcriptional regulator of the ttuABCDE tartrate utilization operon. This chain is HTH-type transcriptional regulator TtuA (ttuA), found in Agrobacterium vitis (Rhizobium vitis).